We begin with the raw amino-acid sequence, 364 residues long: D-alanine--D-alanine ligase A (364 aa).

Residues 145–348 form the ATP-grasp domain; sequence KRLLRDAGLN…YTDLITRLIE (204 aa). 175–230 contacts ATP; the sequence is ESKLGLPLFVKPANQGSSVGVSKVTSEEQYTIAVDLAFEFDHKVIVEQGIKGREIE. Residues aspartate 302, glutamate 315, and asparagine 317 each contribute to the Mg(2+) site.

This sequence belongs to the D-alanine--D-alanine ligase family. Mg(2+) serves as cofactor. It depends on Mn(2+) as a cofactor.

It localises to the cytoplasm. It catalyses the reaction 2 D-alanine + ATP = D-alanyl-D-alanine + ADP + phosphate + H(+). It functions in the pathway cell wall biogenesis; peptidoglycan biosynthesis. Its function is as follows. Cell wall formation. In Escherichia coli O6:H1 (strain CFT073 / ATCC 700928 / UPEC), this protein is D-alanine--D-alanine ligase A.